Here is a 414-residue protein sequence, read N- to C-terminus: Serine hydroxymethyltransferase (414 aa).

(6S)-5,6,7,8-tetrahydrofolate is bound by residues leucine 121 and 125–127 (GHL). An N6-(pyridoxal phosphate)lysine modification is found at lysine 229.

Belongs to the SHMT family. In terms of assembly, homodimer. Requires pyridoxal 5'-phosphate as cofactor.

The protein resides in the cytoplasm. The catalysed reaction is (6R)-5,10-methylene-5,6,7,8-tetrahydrofolate + glycine + H2O = (6S)-5,6,7,8-tetrahydrofolate + L-serine. Its pathway is one-carbon metabolism; tetrahydrofolate interconversion. It functions in the pathway amino-acid biosynthesis; glycine biosynthesis; glycine from L-serine: step 1/1. Its function is as follows. Catalyzes the reversible interconversion of serine and glycine with tetrahydrofolate (THF) serving as the one-carbon carrier. This reaction serves as the major source of one-carbon groups required for the biosynthesis of purines, thymidylate, methionine, and other important biomolecules. Also exhibits THF-independent aldolase activity toward beta-hydroxyamino acids, producing glycine and aldehydes, via a retro-aldol mechanism. This Polynucleobacter necessarius subsp. necessarius (strain STIR1) protein is Serine hydroxymethyltransferase.